Reading from the N-terminus, the 344-residue chain is Heptahelical transmembrane protein 3 (344 aa).

At 1–76 the chain is on the cytoplasmic side; the sequence is MKRRRSAKKS…AFSWHNETLN (76 aa). Residues 77–97 form a helical membrane-spanning segment; sequence IWTHLIGFGIFLWMTVVSCLE. Residues 98-147 lie on the Extracellular side of the membrane; sequence TTEISLAGVFNGMAGVRICLSSNQTLLHDSNVTHHISCLTSQGEAIPKWP. The chain crosses the membrane as a helical span at residues 148–168; sequence WLVYLVGAMGCLICSSVSHLL. The Cytoplasmic portion of the chain corresponds to 169 to 184; sequence ACHSKRFNVFFWRLDY. The helical transmembrane segment at 185–205 threads the bilayer; sequence AGISLMIVASFFAPIYYAFSC. The Extracellular segment spans residues 206 to 210; that stretch reads HPNFR. Residues 211-231 form a helical membrane-spanning segment; the sequence is LLYLSSISILGLLAIITLLSP. Over 232–244 the chain is Cytoplasmic; sequence ALSTPRFRPFRAN. The helical transmembrane segment at 245–265 threads the bilayer; sequence LFLAMGSSAVIPATHVLCLYW. Topologically, residues 266 to 269 are extracellular; that stretch reads DHPN. A helical transmembrane segment spans residues 270–290; that stretch reads VFIALGYEIATALSYFVGATF. At 291-312 the chain is on the cytoplasmic side; the sequence is YVSRVPERWKPGAFDMAGHSHQ. A helical transmembrane segment spans residues 313-333; it reads IFHVFVVMGALAHCVTTLLII. Over 334–344 the chain is Extracellular; it reads DFSRASPSCGF.

The protein belongs to the ADIPOR family. Expressed in roots and flowers.

It is found in the membrane. In terms of biological role, may play a role in abiotic stress response. This chain is Heptahelical transmembrane protein 3 (HHP3), found in Arabidopsis thaliana (Mouse-ear cress).